Here is a 454-residue protein sequence, read N- to C-terminus: Response regulator PleD (454 aa).

2 Response regulatory domains span residues 4 to 120 and 155 to 269; these read RILV…RSLT and RVLI…KTQI. Mg(2+) contacts are provided by Asp9, Asp10, Asp53, and Met55. Asp53 is modified (4-aspartylphosphate). The GGDEF domain occupies 319 to 454; that stretch reads DPVSALLIDI…GRNAVVGKAA (136 aa). Asn335 and Asp344 together coordinate substrate. Glu370 (proton acceptor) is an active-site residue.

Homodimer. Inactive monomer in solution. Post-translationally, phosphorylated by PleC and DivJ. Phosphorylation stimulates cyclase activity.

It is found in the cytoplasm. The catalysed reaction is 2 GTP = 3',3'-c-di-GMP + 2 diphosphate. It functions in the pathway purine metabolism; 3',5'-cyclic di-GMP biosynthesis. With respect to regulation, allosterically inhibited by the product c-di-GMP. Functionally, response regulator that is part of a signal transduction pathway controlling cell differentiation in the swarmer-to-stalked cell transition. In terms of biological role, catalyzes the condensation of two GTP molecules to the cyclic dinucleotide di-GMP (c-di-GMP), which acts as a secondary messenger. This is Response regulator PleD (pleD) from Caulobacter vibrioides (strain ATCC 19089 / CIP 103742 / CB 15) (Caulobacter crescentus).